The primary structure comprises 728 residues: FAS1 domain-containing protein fsc1 (728 aa).

Positions 1 to 21 (MNLQFRLYLLFILLFISFANG) are cleaved as a signal peptide. The Vacuolar portion of the chain corresponds to 22–670 (KNEYEDKSTS…TKRQNRWRIT (649 aa)). 2 consecutive FAS1 domains span residues 29-151 (STSI…DNII) and 154-285 (PPPA…SSLI). N-linked (GlcNAc...) asparagine glycosylation is present at Asn-89. 2 N-linked (GlcNAc...) asparagine glycosylation sites follow: Asn-404 and Asn-501. The helical transmembrane segment at 671–691 (FISISGLLLSVGICVLCYKIY) threads the bilayer. At 692 to 728 (FKFFRNRFMNQGEREPLLAPADSDTMAGRRNSSSLSV) the chain is on the cytoplasmic side.

The protein resides in the vacuole membrane. In terms of biological role, required for the fusion of autophagosomes with the vacuole. The chain is FAS1 domain-containing protein fsc1 (fsc1) from Schizosaccharomyces pombe (strain 972 / ATCC 24843) (Fission yeast).